We begin with the raw amino-acid sequence, 183 residues long: Ribosome rescue factor SmrB (183 aa).

Positions 98 to 173 (LDLHGLTQLQ…GDAALLVLIE (76 aa)) constitute a Smr domain.

This sequence belongs to the SmrB family. As to quaternary structure, associates with collided ribosomes, but not with correctly translating polysomes.

In terms of biological role, acts as a ribosome collision sensor. Detects stalled/collided disomes (pairs of ribosomes where the leading ribosome is stalled and a second ribosome has collided with it) and endonucleolytically cleaves mRNA at the 5' boundary of the stalled ribosome. Stalled/collided disomes form a new interface (primarily via the 30S subunits) that binds SmrB. Cleaved mRNA becomes available for tmRNA ligation, leading to ribosomal subunit dissociation and rescue of stalled ribosomes. The sequence is that of Ribosome rescue factor SmrB from Salmonella paratyphi A (strain ATCC 9150 / SARB42).